Consider the following 505-residue polypeptide: ATP synthase subunit alpha (505 aa).

169–176 contributes to the ATP binding site; it reads GDRQIGKT.

This sequence belongs to the ATPase alpha/beta chains family. F-type ATPases have 2 components, CF(1) - the catalytic core - and CF(0) - the membrane proton channel. CF(1) has five subunits: alpha(3), beta(3), gamma(1), delta(1), epsilon(1). CF(0) has three main subunits: a(1), b(2) and c(9-12). The alpha and beta chains form an alternating ring which encloses part of the gamma chain. CF(1) is attached to CF(0) by a central stalk formed by the gamma and epsilon chains, while a peripheral stalk is formed by the delta and b chains.

The protein localises to the cell inner membrane. The enzyme catalyses ATP + H2O + 4 H(+)(in) = ADP + phosphate + 5 H(+)(out). Its function is as follows. Produces ATP from ADP in the presence of a proton gradient across the membrane. The alpha chain is a regulatory subunit. The chain is ATP synthase subunit alpha from Desulfatibacillum aliphaticivorans.